The primary structure comprises 257 residues: Imidazole glycerol phosphate synthase subunit HisF (257 aa).

Active-site residues include Asp11 and Asp130.

Belongs to the HisA/HisF family. In terms of assembly, heterodimer of HisH and HisF.

Its subcellular location is the cytoplasm. The catalysed reaction is 5-[(5-phospho-1-deoxy-D-ribulos-1-ylimino)methylamino]-1-(5-phospho-beta-D-ribosyl)imidazole-4-carboxamide + L-glutamine = D-erythro-1-(imidazol-4-yl)glycerol 3-phosphate + 5-amino-1-(5-phospho-beta-D-ribosyl)imidazole-4-carboxamide + L-glutamate + H(+). Its pathway is amino-acid biosynthesis; L-histidine biosynthesis; L-histidine from 5-phospho-alpha-D-ribose 1-diphosphate: step 5/9. Functionally, IGPS catalyzes the conversion of PRFAR and glutamine to IGP, AICAR and glutamate. The HisF subunit catalyzes the cyclization activity that produces IGP and AICAR from PRFAR using the ammonia provided by the HisH subunit. In Xylella fastidiosa (strain M23), this protein is Imidazole glycerol phosphate synthase subunit HisF.